Here is a 414-residue protein sequence, read N- to C-terminus: Enterobactin exporter EntS (414 aa).

Over 1–21 (MNRQSWLLNLSLLKTHPAFRA) the chain is Cytoplasmic. Residues 22 to 42 (VFLARFISIVSLGLLGVAVPV) traverse the membrane as a helical segment. Topologically, residues 43-55 (QIQMMTHSTWQVG) are periplasmic. Residues 56-76 (LSVTLTGGAMFIGLMVGGVLA) traverse the membrane as a helical segment. Residues 77 to 83 (DRYERKK) lie on the Cytoplasmic side of the membrane. Residues 84-104 (VILLARGTCGIGFIGLCVNAL) form a helical membrane-spanning segment. The Periplasmic segment spans residues 105–109 (LPEPS). A helical membrane pass occupies residues 110–130 (LLAIYLLGLWDGFFASLGVTA). The Cytoplasmic segment spans residues 131–156 (LLAATPALVGRENLMQAGAITMLTVR). Residues 157-177 (LGSVISPMLGGILLASGGVAW) traverse the membrane as a helical segment. Asparagine 178 is a topological domain (periplasmic). A helical transmembrane segment spans residues 179 to 199 (YGLAAAGTFITLLPLLTLPRL). Over 200–218 (PVPPQPRENPFLALLAAFR) the chain is Cytoplasmic. The chain crosses the membrane as a helical span at residues 219–239 (FLLACPLIGGIALLGGLVTMA). At 240-256 (SAVRVLYPALAMSWQMS) the chain is on the periplasmic side. The helical transmembrane segment at 257-277 (AAQIGLLYAAIPLGAAIGALT) threads the bilayer. The Cytoplasmic segment spans residues 278–287 (SGQLAHSVRP). Residues 288–307 (GLIMLVSTVGSFLAVGLFAI) traverse the membrane as a helical segment. Over 308-313 (MPVWIA) the chain is Periplasmic. A helical transmembrane segment spans residues 314–336 (GVICLALFGWLSAISSLLQYTLL). Residues 337–356 (QTQTPENMLGRMNGLWTAQN) lie on the Cytoplasmic side of the membrane. A helical transmembrane segment spans residues 357–377 (VTGDAIGAALLGGLGAMMTPV). Alanine 378 is a topological domain (periplasmic). The helical transmembrane segment at 379-399 (SASVSGFGLVIIGLLLLLVLG) threads the bilayer. At 400–414 (ELRRFRQTSPVSDAG) the chain is on the cytoplasmic side.

This sequence belongs to the major facilitator superfamily. EntS (TC 2.A.1.38) family.

Its subcellular location is the cell inner membrane. Component of an export pathway for enterobactin. This chain is Enterobactin exporter EntS, found in Salmonella paratyphi A (strain ATCC 9150 / SARB42).